We begin with the raw amino-acid sequence, 813 residues long: Raf homolog serine/threonine-protein kinase (813 aa).

Residues 1–79 (MSRINFKKSS…GGAGTSDKEP (79 aa)) form a disordered region. Residues 9–23 (SSASTTPTSPHCPSP) show a composition bias toward low complexity. The 77-residue stretch at 85–161 (KMIMVHLPFD…PGNELWVHSE (77 aa)) folds into the RBD domain. Residues 170–217 (KHAIVRRTFIPPKSCDVCNNPIWMMGFRCEFCQFKFHQRCSSFAPLYC) form a Phorbol-ester/DAG-type zinc finger. The Zn(2+) site is built by Cys-184, Cys-187, Cys-198, Cys-201, His-206, Cys-209, and Cys-217. 2 stretches are compositionally biased toward polar residues: residues 258–273 (TSGQSPAATPDSSHPD) and 291–301 (SPQNETSQLSP). Disordered stretches follow at residues 258–315 (TSGQ…SAPN), 338–358 (QRLEEESRDKTGSLLSTQARH), and 383–472 (TPLG…PHHE). Basic and acidic residues predominate over residues 338–348 (QRLEEESRDKT). A compositionally biased stretch (low complexity) spans 386-399 (GSNSPSSTCSSPPG). The segment covering 406–421 (TLGQSPNVSGSTTSSL) has biased composition (polar residues). A compositionally biased stretch (basic and acidic residues) spans 453–462 (SPGERLDAQR). The 268-residue stretch at 481–748 (FIIQYKVGSG…VLERLRDIIL (268 aa)) folds into the Protein kinase domain. Residues 487–495 (VGSGSFGTV) and Lys-507 contribute to the ATP site. The active-site Proton acceptor is Asp-602.

Belongs to the protein kinase superfamily. TKL Ser/Thr protein kinase family. RAF subfamily. In terms of assembly, interacts with cdf-1 in a zinc-dependent manner which promotes its activity. It depends on Zn(2+) as a cofactor.

The enzyme catalyses L-seryl-[protein] + ATP = O-phospho-L-seryl-[protein] + ADP + H(+). It catalyses the reaction L-threonyl-[protein] + ATP = O-phospho-L-threonyl-[protein] + ADP + H(+). In terms of biological role, protein kinase that participates in the induction of vulva and has roles in fertility and viability. Acts downstream of the Ras protein let-60. Required for progression of developing oocytes through the pachytene stage. Plays a role in responses to M.nematophilum-mediated bacterial infection by promoting tail swelling and preventing constipation. Positively regulates lifespan upstream of mek-2 and mpk-1. The polypeptide is Raf homolog serine/threonine-protein kinase (lin-45) (Caenorhabditis elegans).